The following is a 194-amino-acid chain: Large ribosomal subunit protein eL15 (194 aa).

Positions 165 to 194 (AGKKGRGLRNKGKGAEKVRPSIRANEGKGK) are disordered. Over residues 167-176 (KKGRGLRNKG) the composition is skewed to basic residues. Positions 177 to 194 (KGAEKVRPSIRANEGKGK) are enriched in basic and acidic residues.

Belongs to the eukaryotic ribosomal protein eL15 family. As to quaternary structure, part of the 50S ribosomal subunit.

This is Large ribosomal subunit protein eL15 from Pyrococcus furiosus (strain ATCC 43587 / DSM 3638 / JCM 8422 / Vc1).